Here is a 374-residue protein sequence, read N- to C-terminus: 4-galactosyl-N-acetylglucosaminide 3-alpha-L-fucosyltransferase FUT5 (374 aa).

Residues 1–15 (MDPLGPAKPQWLWRR) lie on the Cytoplasmic side of the membrane. A helical; Signal-anchor for type II membrane protein membrane pass occupies residues 16–34 (CLAGLLFQLLVAVCFFSYL). Topologically, residues 35–374 (RVSRDDATGS…TVRSIAAWFT (340 aa)) are lumenal. N-linked (GlcNAc...) asparagine glycans are attached at residues Asn-60, Asn-105, Asn-167, and Asn-198.

It belongs to the glycosyltransferase 10 family. In terms of tissue distribution, liver, colon and testis and trace amounts in T-cells and brain.

It localises to the golgi apparatus. Its subcellular location is the golgi stack membrane. It carries out the reaction a beta-D-galactosyl-(1-&gt;3)-N-acetyl-beta-D-glucosaminyl derivative + GDP-beta-L-fucose = a beta-D-galactosyl-(1-&gt;3)-[alpha-L-fucosyl-(1-&gt;4)]-N-acetyl-beta-D-glucosaminyl derivative + GDP + H(+). It catalyses the reaction an N-acetyl-alpha-neuraminyl-(2-&gt;3)-beta-D-galactosyl-(1-&gt;4)-N-acetyl-beta-D-glucosaminyl derivative + GDP-beta-L-fucose = an alpha-Neu5Ac-(2-&gt;3)-beta-D-Gal-(1-&gt;4)-[alpha-L-Fuc-(1-&gt;3)]-beta-D-GlcNAc derivative + GDP + H(+). The catalysed reaction is an alpha-Neu5Ac-(2-&gt;3)-beta-D-Gal-(1-&gt;4)-beta-D-GlcNAc-(1-&gt;3)-beta-D-Gal-(1-&gt;4)-[alpha-L-Fuc-(1-&gt;3)]-beta-D-GlcNAc derivative + GDP-beta-L-fucose = an alpha-Neu5Ac-(2-&gt;3)-beta-D-Gal-(1-&gt;4)-[alpha-L-Fuc-(1-&gt;3)]-beta-D-GlcNAc-(1-&gt;3)-beta-D-Gal-(1-&gt;4)-[alpha-L-Fuc-(1-&gt;3)]-beta-D-GlcNAc derivative + GDP + H(+). The enzyme catalyses a beta-D-galactosyl-(1-&gt;4)-N-acetyl-beta-D-glucosaminyl derivative + GDP-beta-L-fucose = a beta-D-galactosyl-(1-&gt;4)-[alpha-L-fucosyl-(1-&gt;3)]-N-acetyl-beta-D-glucosaminyl derivative + GDP + H(+). It carries out the reaction a neolactoside nLc4Cer + GDP-beta-L-fucose = a neolactoside III(3)-alpha-Fuc-nLc4Cer + GDP + H(+). It catalyses the reaction a neolactoside nLc6Cer + GDP-beta-L-fucose = beta-D-galactosyl-(1-&gt;4)-N-acetyl-beta-D-glucosaminyl-(1-&gt;3)-beta-D-galactosyl-(1-&gt;4)-[alpha-L-fucosyl-(1-&gt;3)]-N-acetyl-beta-D-glucosaminyl-(1-&gt;3)-beta-D-galactosyl-(1-&gt;4)-beta-D-glucosyl-(1&lt;-&gt;1')-ceramide + GDP + H(+). The catalysed reaction is a neolactoside nLc6Cer(d18:1(4E)) + GDP-beta-L-fucose = a neolactoside III(3)-alpha-Fuc-nLc6Cer(d18:1(4E)) + GDP + H(+). The enzyme catalyses a neolactoside nLc4Cer(d18:1(4E)) + GDP-beta-L-fucose = a neolactoside III(3)-alpha-Fuc-nLc4Cer(d18:1(4E)) + GDP + H(+). It carries out the reaction a neolactoside VI(3)-alpha-NeuNAc-nLc6Cer + GDP-beta-L-fucose = a neolactoside VI(3)-alpha-NeuAc,III(3)-alphaFuc-nLc6Cer + GDP + H(+). It catalyses the reaction beta-D-galactosyl-(1-&gt;4)-N-acetyl-D-glucosamine + GDP-beta-L-fucose = beta-D-galactosyl-(1-&gt;4)-[alpha-L-fucosyl-(1-&gt;3)]-N-acetyl-D-glucosamine + GDP + H(+). The catalysed reaction is N-acetyl-alpha-neuraminosyl-(2-&gt;3)-beta-D-galactosyl-(1-&gt;4)-N-acetyl-beta-D-glucosamine + GDP-beta-L-fucose = N-acetyl-alpha-neuraminosyl-(2-&gt;3)-beta-D-galactosyl-(1-&gt;4)-[alpha-L-fucosyl-(1-&gt;3)]-N-acetyl-beta-D-glucosamine + GDP + H(+). The enzyme catalyses alpha-L-Fuc-(1-&gt;2)-beta-D-Gal-(1-&gt;4)-D-GlcNAc + GDP-beta-L-fucose = alpha-L-Fuc-(1-&gt;2)-beta-D-Gal-(1-&gt;4)-[alpha-L-Fuc-(1-&gt;3)]-D-GlcNAc + GDP + H(+). It carries out the reaction an alpha-Neu5Ac-(2-&gt;3)-beta-D-Gal-(1-&gt;3)-D-GlcNAc derivative + GDP-beta-L-fucose = an alpha-Neu5Ac-(2-&gt;3)-beta-D-Gal-(1-&gt;3)-[alpha-L-Fuc-(1-&gt;4)]-beta-D-GlcNAc derivative + GDP + H(+). It participates in protein modification; protein glycosylation. Its function is as follows. Catalyzes preferentially the transfer of L-fucose, from a guanosine diphosphate-beta-L-fucose, to the N-acetyl-beta-D-glucosamine (GlcNAc) of an N-acetyllactosamine unit (type 2 chain) of an oligosaccharide, or a glycoprotein- and a glycolipid-linked N-acetyllactosamine unit via an alpha (1,3) linkage and participates in the surface expression of VIM-2, Lewis X/SSEA-1 and sialyl Lewis X antigens. Preferentially transfers fucose to the GlcNAc of an internal N-acetyllactosamine unit of a poly-N-acetyllactosamine chain acceptor substrate. Also catalyzes to a lesser extend the transfer of L-fucose to the GlcNAc of a type 1 (beta-D-galactosyl-(1-&gt;3)-N-acetyl-beta-D-glucosaminyl) or H-type 1 (alpha-L-Fuc-(1-&gt;2)-beta-D-Gal-(1-&gt;3)-D-GlcNAc) chain oligosaccharide via an alpha (1,4) linkage. Preferentially catalyzes sialylated type 2 oligosaccharide acceptors over neutral type 2 or H type 2 (alpha-L-Fuc-(1-&gt;2)-beta-D-Gal-(1-&gt;4)-D-GlcNAc) oligosaccharide acceptors. Lactose-based structures are also acceptor substrates. The sequence is that of 4-galactosyl-N-acetylglucosaminide 3-alpha-L-fucosyltransferase FUT5 from Homo sapiens (Human).